Consider the following 105-residue polypeptide: Heat shock protein HspQ (105 aa).

The disordered stretch occupies residues 75 to 105 (SELQDEHPEQPSMDELAQTIRKQLQAPRLRN).

The protein belongs to the HspQ family.

It localises to the cytoplasm. Involved in the degradation of certain denaturated proteins, including DnaA, during heat shock stress. This chain is Heat shock protein HspQ, found in Escherichia coli O127:H6 (strain E2348/69 / EPEC).